A 641-amino-acid chain; its full sequence is Protein zwilch (641 aa).

At Ser312 the chain carries Phosphoserine.

Belongs to the ZWILCH family. As to quaternary structure, component of the RZZ complex composed of rod, Zw10 and Zwilch.

It localises to the cytoplasm. It is found in the chromosome. The protein localises to the centromere. Its subcellular location is the kinetochore. The protein resides in the cytoskeleton. It localises to the spindle. In terms of biological role, essential component of the mitotic checkpoint, which prevents cells from prematurely exiting mitosis. Required for the assembly of the dynein-dynactin, Mad2 complexes and spindly/CG15415 onto kinetochores. Its function related to the spindle assembly machinery is proposed to depend on its association in the RZZ complex. Failure to assemble the complex due to the absence of any one of its components, results in the incorrect redistribution of the remaining components to diverse membrane compartments. This Drosophila melanogaster (Fruit fly) protein is Protein zwilch.